The following is a 168-amino-acid chain: Sec-independent protein translocase protein TatB (168 aa).

A helical membrane pass occupies residues 1 to 21; it reads MIDLGISKLALIGAVALIVIG. 2 disordered regions span residues 92 to 132 and 146 to 168; these read FDGS…QGAR and VQSG…SFFE. Positions 94–107 are enriched in low complexity; sequence GSASSSSSSDTGSG. A compositionally biased stretch (basic residues) spans 117–126; sequence KSHNGRKSWR.

The protein belongs to the TatB family. The Tat system comprises two distinct complexes: a TatABC complex, containing multiple copies of TatA, TatB and TatC subunits, and a separate TatA complex, containing only TatA subunits. Substrates initially bind to the TatABC complex, which probably triggers association of the separate TatA complex to form the active translocon.

It is found in the cell inner membrane. Its function is as follows. Part of the twin-arginine translocation (Tat) system that transports large folded proteins containing a characteristic twin-arginine motif in their signal peptide across membranes. Together with TatC, TatB is part of a receptor directly interacting with Tat signal peptides. TatB may form an oligomeric binding site that transiently accommodates folded Tat precursor proteins before their translocation. The chain is Sec-independent protein translocase protein TatB from Cupriavidus metallidurans (strain ATCC 43123 / DSM 2839 / NBRC 102507 / CH34) (Ralstonia metallidurans).